The primary structure comprises 686 residues: Phosphatidylinositol 4,5-bisphosphate-binding protein SLM1 (686 aa).

Positions 33 to 147 (RSMTSADHAN…KQLQGKNSLT (115 aa)) are disordered. Over residues 45-63 (QQQQQQQQQQQQQQQQQQQ) the composition is skewed to low complexity. Positions 64–126 (SASFQNGSLT…PNIDSNTNVT (63 aa)) are enriched in polar residues. Residues 133–144 (NNNNGKQLQGKN) are compositionally biased toward low complexity. Residues serine 145, serine 150, and serine 153 each carry the phosphoserine modification. Over residues 157-172 (SSLQRQRLAQQQQQQQ) the composition is skewed to low complexity. The tract at residues 157-176 (SSLQRQRLAQQQQQQQDPRS) is disordered. Residues 296–381 (RLEDLRRDLI…FLHEAFDNLE (86 aa)) adopt a coiled-coil conformation. In terms of domain architecture, PH spans 468 to 581 (YEIKSGFLER…WFDNLKILTS (114 aa)). The segment at 626-669 (VENDENDDINSNYVGSTVTPKLDNQTNTNTSMSSLPDTNDSELQ) is disordered. Positions 634 to 663 (INSNYVGSTVTPKLDNQTNTNTSMSSLPDT) are enriched in polar residues. Positions 673-678 (PNIYIQ) match the PXIXIT-like, required for interaction with CNA1 and CNA2, and calcineurin-dependent dephosphorylation motif.

As to quaternary structure, heterodimer of SLM1-SLM2. Binds phosphatidylinositol 4,5-bisphosphate, which is required for function. Interacts with the TORC2 subunits AVO2, BIT61 and TOR2. Interacts with the calcineurin catalytic subunits CNA1 and CNA2. Phosphorylated by the target of rapamycin complex 2 (TORC2) and dephosphorylated by serine/threonine-protein phosphatase 2B (calcineurin). Dephosphorylated in response to the disruption or inhibition of sphingolipid synthesis.

It localises to the cell membrane. Functionally, together with SLM2, acts as an effector of the TORC2- and calcineurin-signaling pathways. Phosphorylated and activated by TORC2 under favorable growth conditions. Mediates actin polarization via inhibition of calcineurin-dependent transcription. Upon nutrient limitation or environmental stress, gets dephosphorylated by calcineurin. Dephosphorylation inhibits its interaction with TORC2, thereby antagonizing TORC2 signaling and mediating calcineurin-dependent actin depolarization. May play a role in the response to the disruption of sphingolipid synthesis, where dephosphorylation of SLM1 leads to the activation and phosphorylation of YPK1 through the TORC2 and PKH1 pathways, which in turn phosphorylates ORM1 and LAG1 to activate sphingolipid synthesis. Also functions in heat-induced, calcineurin-mediated uracil permease (FUR4) endocytosis. The sequence is that of Phosphatidylinositol 4,5-bisphosphate-binding protein SLM1 (SLM1) from Saccharomyces cerevisiae (strain ATCC 204508 / S288c) (Baker's yeast).